The sequence spans 91 residues: MVAEVILPGRPTTLKADIREKIANFYNINPDTMAKNTPLSQDDKVAKTVEQRRKDAAAHKEAYNAMPEAERRHLNSEKYANRKAEVSYKHR.

The segment at 51 to 91 (QRRKDAAAHKEAYNAMPEAERRHLNSEKYANRKAEVSYKHR) is disordered.

The protein belongs to the eukaryotic ribosomal protein eS24 family.

This Caenorhabditis elegans protein is Small ribosomal subunit protein eS24.